Consider the following 106-residue polypeptide: uncharacterized protein (106 aa).

This is an uncharacterized protein from Pyrococcus woesei.